The following is a 270-amino-acid chain: MPELPEVEVSRLGISPHIEGRTIKSVKVHDKRLRWPVPETVHKVEGHVLRSVSRRSKYLLLQTDNGCLILHLGMSGKLRVVPAETTHYKHDHIDIEFDNGQTLRLNDPRRFGALLYSESDVSGHELLSQLGPEPLTDAFNIDYLFERSRGRSQSVKTFLMDNKVVVGVGNIYANEALFKAGINPKRAAGKISKVRYQKLVPIIKETLASAIELGGTTLKDFTQVDGNPGYFAQKLQVYGRGGKLCMVCSNRLKEVRLGQRSTVYCTQCQR.

Catalysis depends on Pro-2, which acts as the Schiff-base intermediate with DNA. The active-site Proton donor is Glu-3. The Proton donor; for beta-elimination activity role is filled by Lys-57. The DNA site is built by His-90, Arg-109, and Arg-151. The FPG-type zinc finger occupies 236–270 (QVYGRGGKLCMVCSNRLKEVRLGQRSTVYCTQCQR). The Proton donor; for delta-elimination activity role is filled by Arg-260.

The protein belongs to the FPG family. Monomer. It depends on Zn(2+) as a cofactor.

It catalyses the reaction Hydrolysis of DNA containing ring-opened 7-methylguanine residues, releasing 2,6-diamino-4-hydroxy-5-(N-methyl)formamidopyrimidine.. The catalysed reaction is 2'-deoxyribonucleotide-(2'-deoxyribose 5'-phosphate)-2'-deoxyribonucleotide-DNA = a 3'-end 2'-deoxyribonucleotide-(2,3-dehydro-2,3-deoxyribose 5'-phosphate)-DNA + a 5'-end 5'-phospho-2'-deoxyribonucleoside-DNA + H(+). Functionally, involved in base excision repair of DNA damaged by oxidation or by mutagenic agents. Acts as a DNA glycosylase that recognizes and removes damaged bases. Has a preference for oxidized purines, such as 7,8-dihydro-8-oxoguanine (8-oxoG). Has AP (apurinic/apyrimidinic) lyase activity and introduces nicks in the DNA strand. Cleaves the DNA backbone by beta-delta elimination to generate a single-strand break at the site of the removed base with both 3'- and 5'-phosphates. The sequence is that of Formamidopyrimidine-DNA glycosylase from Idiomarina loihiensis (strain ATCC BAA-735 / DSM 15497 / L2-TR).